Reading from the N-terminus, the 220-residue chain is Metalloproteinase inhibitor 2 (220 aa).

Residues 1-26 (MGATARSLRLALGLLLLGTLPRGADA) form the signal peptide. Cysteine 27 contributes to the Zn(2+) binding site. 2 involved in metalloproteinase-binding regions span residues 27–30 (CSCS) and 95–96 (SA). Intrachain disulfides connect cysteine 27/cysteine 98, cysteine 29/cysteine 127, cysteine 39/cysteine 152, cysteine 154/cysteine 201, cysteine 159/cysteine 164, and cysteine 172/cysteine 193. In terms of domain architecture, NTR spans 27–152 (CSCSPVHPQQ…SLNHRYQMGC (126 aa)).

Belongs to the protease inhibitor I35 (TIMP) family. As to quaternary structure, interacts (via the C-terminal) with MMP2 (via the C-terminal PEX domain); the interaction inhibits the MMP2 activity. Post-translationally, the activity of TIMP2 is dependent on the presence of disulfide bonds. Predominantly expressed in the lung in alveolar macrophages and epithelial cells. Also found in brain, kidney, intestine, spleen and heart.

Its subcellular location is the secreted. Functionally, complexes with metalloproteinases (such as collagenases) and irreversibly inactivates them by binding to their catalytic zinc cofactor. The sequence is that of Metalloproteinase inhibitor 2 (TIMP2) from Cavia porcellus (Guinea pig).